We begin with the raw amino-acid sequence, 462 residues long: MLKMTEEHDKCVSDQPCSPSGTNSSMSQDESDSDAPSSPTGSDGQGSLLTSLGRKVDSEDDERFPACIRDAVSQVLKGYDWSLVPMPVRGNGSLKNKPHVKRPMNAFMVWAQAARRKLADQYPHLHNAELSKTLGKLWRLLSESEKRPFVDEAERLRIQHKKDHPDYKYQPRRRKNVKPGQSDSDSGAELAHHMYKAEPGMGGMGGITDAHHHAEHAGQPHGPPTPPTTPKTDLHHGAKQDLKHEGRRLIDSSRQNIDFSNVDISELSTDVISNMETFDVHEFDQYLPLNGHTSSSSSLPSDQPPAPVSSYASSYGHAGVNGPAWSRKGAMPSSSPSSGEVGQHRLHIKTEQLSPSHYSEHSHRSPPHSDYGSYSSPACVTSATSAASVPFSGSQCDYSDIQSSNYYNPYSSYSSSLYQYPYFHSSRRPYGSPILNSLSMAPAHSPTGSGWDQPVYTTLSRP.

A compositionally biased stretch (basic and acidic residues) spans 1-12 (MLKMTEEHDKCV). 3 disordered regions span residues 1–57 (MLKM…RKVD), 155–243 (RLRI…QDLK), and 291–375 (GHTS…GSYS). The span at 15–50 (QPCSPSGTNSSMSQDESDSDAPSSPTGSDGQGSLLT) shows a compositional bias: polar residues. The HMG box DNA-binding region spans 100–168 (VKRPMNAFMV…QHKKDHPDYK (69 aa)). 3 stretches are compositionally biased toward basic and acidic residues: residues 155–169 (RLRIQHKKDHPDYKY), 209–218 (DAHHHAEHAG), and 232–243 (TDLHHGAKQDLK). The 9aaTAD motif lies at 415-423 (SSLYQYPYF). A disordered region spans residues 442–462 (PAHSPTGSGWDQPVYTTLSRP). Polar residues predominate over residues 446-462 (PTGSGWDQPVYTTLSRP).

It localises to the nucleus. Functionally, may play a role in central nervous system, limb and facial development. May be involved in male sex determination. Binds the consensus motif 5'-[AT][AT]CAA[AT]G-3'. The protein is Transcription factor Sox-8 (sox8) of Tetraodon nigroviridis (Spotted green pufferfish).